The sequence spans 236 residues: uncharacterized protein (236 aa).

This is an uncharacterized protein from Escherichia coli O157:H7.